Reading from the N-terminus, the 55-residue chain is Spermatid nuclear transition protein 1 (55 aa).

Residues 1-42 show a composition bias toward basic residues; the sequence is MSTSRKLKSQGMRRGKNRTPHKGVKRSGSKRKYRKSSLKSRK. The interval 1–55 is disordered; sequence MSTSRKLKSQGMRRGKNRTPHKGVKRSGSKRKYRKSSLKSRKRCDDANRNLRSHL. Phosphoserine is present on residues S9, S36, S37, and S40.

It belongs to the nuclear transition protein 1 family. In terms of tissue distribution, testis.

The protein resides in the nucleus. It is found in the chromosome. Plays a key role in the replacement of histones to protamine in the elongating spermatids of mammals. In condensing spermatids, loaded onto the nucleosomes, where it promotes the recruitment and processing of protamines, which are responsible for histone eviction. The polypeptide is Spermatid nuclear transition protein 1 (TNP1) (Bos taurus (Bovine)).